The sequence spans 663 residues: ATP-dependent zinc metalloprotease FtsH (663 aa).

At 1–12 (MNKKETNTSWWR) the chain is on the stromal side. A helical membrane pass occupies residues 13–33 (IILISLGISIICILAAFLAMK). Residues 34-135 (DGFFVLENNT…HPPKLDIFKT (102 aa)) lie on the Lumenal side of the membrane. The chain crosses the membrane as a helical span at residues 136 to 156 (ISDTLGSLIVPGLVVAVFYLF). The Stromal segment spans residues 157–663 (LERANNNNNN…KIYESKFPKK (507 aa)). The tract at residues 165-184 (NNNSNGSPFGPGGGPNQNMR) is disordered. 244–251 (GPPGTGKT) contacts ATP. His-465 serves as a coordination point for Zn(2+). Glu-466 is an active-site residue. Positions 469 and 543 each coordinate Zn(2+).

The protein in the central section; belongs to the AAA ATPase family. In the C-terminal section; belongs to the peptidase M41 family. In terms of assembly, homohexamer. Requires Zn(2+) as cofactor.

Its subcellular location is the plastid. It localises to the chloroplast thylakoid membrane. In terms of biological role, acts as a processive, ATP-dependent zinc metallopeptidase. The protein is ATP-dependent zinc metalloprotease FtsH of Heterosigma akashiwo (strain NIES-293 / 8280G21-1).